Consider the following 525-residue polypeptide: Major capsid protein L1 (525 aa).

Belongs to the papillomaviridae L1 protein family. As to quaternary structure, self-assembles into homopentamers. The capsid has an icosahedral symmetry and consists of 72 capsomers, with each capsomer being a pentamer of L1. Interacts with the minor capsid protein L2; this interaction is necessary for viral genome encapsidation. Interacts with protein E2; this interaction enhances E2-dependent replication and transcription activation.

The protein resides in the virion. It localises to the host nucleus. In terms of biological role, forms an icosahedral capsid with a T=7 symmetry and a 50 nm diameter. The capsid is composed of 72 pentamers linked to each other by disulfide bonds and associated with L2 proteins. Binds to heparan sulfate proteoglycans on cell surface of basal layer keratinocytes to provide initial virion attachment. This binding mediates a conformational change in the virus capsid that facilitates efficient infection. The virion enters the host cell via endocytosis. During virus trafficking, L1 protein dissociates from the viral DNA and the genomic DNA is released to the host nucleus. The virion assembly takes place within the cell nucleus. Encapsulates the genomic DNA together with protein L2. The protein is Major capsid protein L1 of Human papillomavirus type 5b.